A 120-amino-acid chain; its full sequence is NAD(P)H-quinone oxidoreductase subunit 3, chloroplastic (120 aa).

Helical transmembrane passes span 9–29, 64–84, and 88–108; these read IFWA…LISG, MFAL…PWAM, and VLGV…ILGL.

It belongs to the complex I subunit 3 family. In terms of assembly, NDH is composed of at least 16 different subunits, 5 of which are encoded in the nucleus.

It localises to the plastid. Its subcellular location is the chloroplast thylakoid membrane. The catalysed reaction is a plastoquinone + NADH + (n+1) H(+)(in) = a plastoquinol + NAD(+) + n H(+)(out). It carries out the reaction a plastoquinone + NADPH + (n+1) H(+)(in) = a plastoquinol + NADP(+) + n H(+)(out). Functionally, NDH shuttles electrons from NAD(P)H:plastoquinone, via FMN and iron-sulfur (Fe-S) centers, to quinones in the photosynthetic chain and possibly in a chloroplast respiratory chain. The immediate electron acceptor for the enzyme in this species is believed to be plastoquinone. Couples the redox reaction to proton translocation, and thus conserves the redox energy in a proton gradient. The protein is NAD(P)H-quinone oxidoreductase subunit 3, chloroplastic of Aethionema cordifolium (Lebanon stonecress).